The chain runs to 274 residues: Large ribosomal subunit protein uL2 (274 aa).

Disordered regions lie at residues 36–61 and 223–274; these read QKSKTGGRNSNGRITTRHRGGGHKQR and VAMN…RRKR. The span at 37–46 shows a compositional bias: polar residues; that stretch reads KSKTGGRNSN. Basic residues-rich tracts occupy residues 50 to 61 and 254 to 274; these read TTRHRGGGHKQR and KGHKTRKNKRTDKYIVRRRKR.

Belongs to the universal ribosomal protein uL2 family. Part of the 50S ribosomal subunit. Forms a bridge to the 30S subunit in the 70S ribosome.

Functionally, one of the primary rRNA binding proteins. Required for association of the 30S and 50S subunits to form the 70S ribosome, for tRNA binding and peptide bond formation. It has been suggested to have peptidyltransferase activity; this is somewhat controversial. Makes several contacts with the 16S rRNA in the 70S ribosome. The protein is Large ribosomal subunit protein uL2 of Halorhodospira halophila (strain DSM 244 / SL1) (Ectothiorhodospira halophila (strain DSM 244 / SL1)).